Reading from the N-terminus, the 132-residue chain is Large ribosomal subunit protein uL24 (132 aa).

This sequence belongs to the universal ribosomal protein uL24 family. In terms of assembly, part of the 50S ribosomal subunit.

In terms of biological role, one of two assembly initiator proteins, it binds directly to the 5'-end of the 23S rRNA, where it nucleates assembly of the 50S subunit. One of the proteins that surrounds the polypeptide exit tunnel on the outside of the subunit. The sequence is that of Large ribosomal subunit protein uL24 from Synechococcus sp. (strain JA-2-3B'a(2-13)) (Cyanobacteria bacterium Yellowstone B-Prime).